Here is a 309-residue protein sequence, read N- to C-terminus: D-alanine--D-alanine ligase (309 aa).

An ATP-grasp domain is found at 99–304; it reads KRVLLQAGIP…FPDLVQKIVD (206 aa). 132-187 is an ATP binding site; it reads LKELGLPVVIKAPTQGSTIGTFIVREEGELEPAIAGALKYDLSFMAEAYLAGPEIT. Mg(2+) is bound by residues D258, E271, and N273.

It belongs to the D-alanine--D-alanine ligase family. Mg(2+) is required as a cofactor. Requires Mn(2+) as cofactor.

The protein localises to the cytoplasm. The enzyme catalyses 2 D-alanine + ATP = D-alanyl-D-alanine + ADP + phosphate + H(+). Its pathway is cell wall biogenesis; peptidoglycan biosynthesis. Cell wall formation. The chain is D-alanine--D-alanine ligase from Moorella thermoacetica (strain ATCC 39073 / JCM 9320).